Reading from the N-terminus, the 217-residue chain is Growth hormone variant (217 aa).

A signal peptide spans 1-26 (MAAGSWTCLILAIALLCLPWLQEGSA). 2 disulfide bridges follow: Cys79–Cys191 and Cys208–Cys215. Phosphoserine occurs at positions 132 and 176.

The protein belongs to the somatotropin/prolactin family. As to expression, expressed in the placenta.

The protein localises to the secreted. Plays an important role in growth control. Its major role in stimulating body growth is to stimulate the liver and other tissues to secrete IGF1. It stimulates both the differentiation and proliferation of myoblasts. It also stimulates amino acid uptake and protein synthesis in muscle and other tissues. In Macaca mulatta (Rhesus macaque), this protein is Growth hormone variant (GH2).